The following is a 399-amino-acid chain: Elongation factor Tu (399 aa).

One can recognise a tr-type G domain in the interval 10–209 (KPHVNIGTIG…EVDAYIPTPK (200 aa)). The G1 stretch occupies residues 19–26 (GHVDHGKT). A GTP-binding site is contributed by 19 to 26 (GHVDHGKT). Position 26 (Thr-26) interacts with Mg(2+). The tract at residues 60–64 (GITIA) is G2. Positions 81–84 (DCPG) are G3. Residues 81–85 (DCPGH) and 136–139 (NKQD) contribute to the GTP site. The G4 stretch occupies residues 136–139 (NKQD). Residues 174 to 176 (SAL) are G5.

It belongs to the TRAFAC class translation factor GTPase superfamily. Classic translation factor GTPase family. EF-Tu/EF-1A subfamily. Monomer.

The protein localises to the cytoplasm. The enzyme catalyses GTP + H2O = GDP + phosphate + H(+). Its function is as follows. GTP hydrolase that promotes the GTP-dependent binding of aminoacyl-tRNA to the A-site of ribosomes during protein biosynthesis. The chain is Elongation factor Tu from Helicobacter pylori (strain P12).